A 1500-amino-acid polypeptide reads, in one-letter code: Myosin-8 (1500 aa).

One can recognise a Myosin N-terminal SH3-like domain in the interval 8–57; the sequence is AVGSHVWVEDPDEAWLDGEVVEINGDQIKVLCASGKQVVVKDSNIYPKDV. In terms of domain architecture, Myosin motor spans 62–732; sequence SGVEDMTRLA…QMADLDTRRT (671 aa). Residues 156–163 and 210–218 each bind ATP; these read GESGAGKT and NNNSSRFGK. Actin-binding regions lie at residues 496–530, 532–555, 590–613, and 613–635; these read LIEK…YQTY, NHKR…AGDV, FPPV…KQQL, and LVSL…KPNN. 6 consecutive IQ domains span residues 735-764, 758-787, 783-812, 806-835, 831-860, and 854-883; these read LGRS…SATQ, LRIS…EAAA, REAA…ATIL, LFSA…TKAA, QTKA…AAIT, and LKKA…AARE. A coiled-coil region spans residues 884–1049; it reads TGALQEAKNK…TEKQIMLQQT (166 aa). Positions 1146 to 1447 constitute a Dilute domain; the sequence is DRLIEMIGSA…ISSMRALMTE (302 aa).

Belongs to the TRAFAC class myosin-kinesin ATPase superfamily. Myosin family. Plant myosin class XI subfamily. As to quaternary structure, homodimer.

The protein localises to the cytoplasm. Its function is as follows. Myosin heavy chain that is required for the cell cycle-regulated transport of various organelles and proteins for their segregation. Functions by binding with its tail domain to receptor proteins on organelles and exerting force with its N-terminal motor domain against actin filaments, thereby transporting its cargo along polarized actin cables. The protein is Myosin-8 (XI-B) of Arabidopsis thaliana (Mouse-ear cress).